The sequence spans 650 residues: Acetyl-coenzyme A synthetase (650 aa).

CoA-binding positions include 191 to 194 (RGGR), Thr-311, and Asn-335. Residues 387–389 (GEP), 411–416 (DTWWQT), Asp-500, and Arg-515 contribute to the ATP site. Residue Ser-523 participates in CoA binding. Arg-526 provides a ligand contact to ATP. Val-537, His-539, and Val-542 together coordinate Mg(2+). Arg-584 serves as a coordination point for CoA. At Lys-609 the chain carries N6-acetyllysine.

This sequence belongs to the ATP-dependent AMP-binding enzyme family. Mg(2+) serves as cofactor. Acetylated. Deacetylation by the SIR2-homolog deacetylase activates the enzyme.

It carries out the reaction acetate + ATP + CoA = acetyl-CoA + AMP + diphosphate. Catalyzes the conversion of acetate into acetyl-CoA (AcCoA), an essential intermediate at the junction of anabolic and catabolic pathways. AcsA undergoes a two-step reaction. In the first half reaction, AcsA combines acetate with ATP to form acetyl-adenylate (AcAMP) intermediate. In the second half reaction, it can then transfer the acetyl group from AcAMP to the sulfhydryl group of CoA, forming the product AcCoA. The protein is Acetyl-coenzyme A synthetase of Shewanella sediminis (strain HAW-EB3).